The primary structure comprises 325 residues: Chain length determinant protein (325 aa).

Residues 1–31 lie on the Cytoplasmic side of the membrane; sequence MRVENNNVSGQNLDPEQIDLIDLLVQLWRGK. The helical transmembrane segment at 32–52 threads the bilayer; that stretch reads MTIIISVIVAIVLAIGYLVVA. The Periplasmic segment spans residues 53-294; it reads KEKWTSTAIV…LPIRRDSPKK (242 aa). Residues 295–315 form a helical membrane-spanning segment; sequence AITLILAVLLGGMVGAGIVLG. Residues 316–325 are Cytoplasmic-facing; that stretch reads RNALRNYNAK.

This sequence belongs to the WzzB/Cld/Rol family.

The protein resides in the cell inner membrane. It functions in the pathway bacterial outer membrane biogenesis; lipopolysaccharide biosynthesis. Functionally, confers a modal distribution of chain length on the O-antigen component of lipopolysaccharide (LPS). Gives rise to a reduced number of short chain molecules and increases in numbers of longer molecules, with a modal value of 13 (in strain O111/M92) and of 17 (in strain K12). This Escherichia coli protein is Chain length determinant protein (wzzB).